The chain runs to 148 residues: MKKITLIGSELAKTGNEFIYLGHLNECESCRFKRICHNNLDVGARYKIVSVRSANHPCTVHENGVKVVEVAPAEFTILIESKKALEGVTLTHANVLCDKVCCKNYLSCHPEGISGKYKVSSIFSEKIDCQKGHSLKKVSIISLDESNK.

This sequence belongs to the UPF0179 family.

The chain is UPF0179 protein Mevan_0979 from Methanococcus vannielii (strain ATCC 35089 / DSM 1224 / JCM 13029 / OCM 148 / SB).